The sequence spans 252 residues: 5'-nucleotidase SurE (252 aa).

The a divalent metal cation site is built by Asp-8, Asp-9, Ser-39, and Asn-95.

The protein belongs to the SurE nucleotidase family. A divalent metal cation serves as cofactor.

The protein localises to the cytoplasm. The catalysed reaction is a ribonucleoside 5'-phosphate + H2O = a ribonucleoside + phosphate. Its function is as follows. Nucleotidase that shows phosphatase activity on nucleoside 5'-monophosphates. The chain is 5'-nucleotidase SurE from Clostridium botulinum (strain 657 / Type Ba4).